The chain runs to 932 residues: Protocadherin gamma-A6 (932 aa).

An N-terminal signal peptide occupies residues 1–29; sequence MAPPQRHPQRSEQVLLLTLLGTLWGAAAA. 6 Cadherin domains span residues 30–133, 134–242, 243–347, 348–452, 453–562, and 570–682; these read QIRY…TPRF, LKEE…TPVF, TQPV…VPEV, VVTS…PPTF, PHSS…APEI, and DGST…EPSA. The Extracellular segment spans residues 30–692; the sequence is QIRYSIPEEL…KPNDSDLTLY (663 aa). Asn81 carries N-linked (GlcNAc...) asparagine glycosylation. Asn419 and Asn545 each carry an N-linked (GlcNAc...) asparagine glycan. N-linked (GlcNAc...) asparagine glycosylation is present at Asn685. A helical transmembrane segment spans residues 693-713; that stretch reads LVVAVAAVSCVFLAFVIVLLA. The Cytoplasmic segment spans residues 714–932; it reads LRLQRWHKSR…KKKSGKKEKK (219 aa). Disordered regions lie at residues 803–841 and 902–932; these read DPRQLQQAPPNTDWRFSQAQRPGTSGSQNGDDTGTWPNN and ATLTNAAGKRDGKAPAGGNGNKKKSGKKEKK. Polar residues predominate over residues 806 to 841; sequence QLQQAPPNTDWRFSQAQRPGTSGSQNGDDTGTWPNN. The segment covering 922–932 has biased composition (basic residues); that stretch reads NKKKSGKKEKK.

The protein resides in the cell membrane. Functionally, potential calcium-dependent cell-adhesion protein. May be involved in the establishment and maintenance of specific neuronal connections in the brain. This is Protocadherin gamma-A6 (PCDHGA6) from Pan troglodytes (Chimpanzee).